We begin with the raw amino-acid sequence, 109 residues long: Cell division protein ZapA (109 aa).

Residues Glu22–Arg99 adopt a coiled-coil conformation.

The protein belongs to the ZapA family. Type 1 subfamily. As to quaternary structure, homodimer. Interacts with FtsZ.

The protein localises to the cytoplasm. In terms of biological role, activator of cell division through the inhibition of FtsZ GTPase activity, therefore promoting FtsZ assembly into bundles of protofilaments necessary for the formation of the division Z ring. It is recruited early at mid-cell but it is not essential for cell division. The protein is Cell division protein ZapA of Yersinia enterocolitica serotype O:8 / biotype 1B (strain NCTC 13174 / 8081).